Consider the following 84-residue polypeptide: Large ribosomal subunit protein bL27 (84 aa).

Residues 1 to 21 (MAHKKGGGSTKNGRDSNPKYL) form a disordered region.

The protein belongs to the bacterial ribosomal protein bL27 family.

The chain is Large ribosomal subunit protein bL27 from Chlorobaculum parvum (strain DSM 263 / NCIMB 8327) (Chlorobium vibrioforme subsp. thiosulfatophilum).